A 324-amino-acid chain; its full sequence is Methionyl-tRNA formyltransferase (324 aa).

Residue 114–117 coordinates (6S)-5,6,7,8-tetrahydrofolate; it reads SLLP.

It belongs to the Fmt family.

The enzyme catalyses L-methionyl-tRNA(fMet) + (6R)-10-formyltetrahydrofolate = N-formyl-L-methionyl-tRNA(fMet) + (6S)-5,6,7,8-tetrahydrofolate + H(+). Its function is as follows. Attaches a formyl group to the free amino group of methionyl-tRNA(fMet). The formyl group appears to play a dual role in the initiator identity of N-formylmethionyl-tRNA by promoting its recognition by IF2 and preventing the misappropriation of this tRNA by the elongation apparatus. In Azobacteroides pseudotrichonymphae genomovar. CFP2, this protein is Methionyl-tRNA formyltransferase.